The primary structure comprises 115 residues: U31-theraphotoxin-Cg1b (115 aa).

Residues 1-18 form the signal peptide; sequence MKLCVIIIASLMVASVSG. The propeptide occupies 19–51; that stretch reads RLRKIKGTELDKKMLLEKLGHGMDIRFEETPRE. 4 disulfides stabilise this stretch: cysteine 52-cysteine 67, cysteine 60-cysteine 73, cysteine 64-cysteine 113, and cysteine 66-cysteine 86.

Belongs to the neurotoxin 03 (Tx2) family. 02 subfamily. In terms of tissue distribution, expressed by the venom gland.

Its subcellular location is the secreted. Probable ion channel inhibitor. This chain is U31-theraphotoxin-Cg1b, found in Chilobrachys guangxiensis (Chinese earth tiger tarantula).